The primary structure comprises 66 residues: Surface composition regulator (66 aa).

This sequence belongs to the GlgS family.

Its function is as follows. Major determinant of cell surface composition. Negatively regulates motility, adhesion and synthesis of biofilm exopolysaccharides. The protein is Surface composition regulator of Shigella dysenteriae serotype 1 (strain Sd197).